Reading from the N-terminus, the 252-residue chain is Triosephosphate isomerase (252 aa).

N10–K12 is a binding site for substrate. Catalysis depends on H96, which acts as the Electrophile. The Proton acceptor role is filled by E168. Residues G174, S214, and G235–G236 contribute to the substrate site.

It belongs to the triosephosphate isomerase family. In terms of assembly, homodimer.

It is found in the cytoplasm. It catalyses the reaction D-glyceraldehyde 3-phosphate = dihydroxyacetone phosphate. The protein operates within carbohydrate biosynthesis; gluconeogenesis. It participates in carbohydrate degradation; glycolysis; D-glyceraldehyde 3-phosphate from glycerone phosphate: step 1/1. In terms of biological role, involved in the gluconeogenesis. Catalyzes stereospecifically the conversion of dihydroxyacetone phosphate (DHAP) to D-glyceraldehyde-3-phosphate (G3P). This is Triosephosphate isomerase from Streptococcus pyogenes serotype M18 (strain MGAS8232).